Consider the following 684-residue polypeptide: ATP-dependent DNA helicase RecG (684 aa).

Residues 51–148 (RHIASMATLQ…ADVPQFQAPH (98 aa)) form a wedge domain region. A Helicase ATP-binding domain is found at 278–439 (DLARHRPMRR…VHADLEVSVI (162 aa)). Residue 291–298 (GDVGSGKT) participates in ATP binding. The DEAH box motif lies at 392 to 395 (DEQH).

It belongs to the helicase family. RecG subfamily. Monomer.

The enzyme catalyses Couples ATP hydrolysis with the unwinding of duplex DNA by translocating in the 3'-5' direction.. It catalyses the reaction ATP + H2O = ADP + phosphate + H(+). Functionally, plays a critical role in recombination and DNA repair. Helps process Holliday junction intermediates to mature products by catalyzing branch migration. Has replication fork regression activity, unwinds stalled or blocked replication forks to make a HJ that can be resolved. Has a DNA unwinding activity characteristic of a DNA helicase with 3'-5' polarity. In Acidithiobacillus ferridurans, this protein is ATP-dependent DNA helicase RecG.